We begin with the raw amino-acid sequence, 137 residues long: MKISLTAATVAALVLAAPAFAGDAAKGEKEFNKCKTCHSIIAPDGTEIVKGAKTGPNLYGVVGRTAGTYPEFKYKDSIVALGASGFAWTEEDIATYVKDPGAFLKEKLDDKKAKTGMAFKLAKGGEDVAAYLASVVK.

The N-terminal stretch at 1–21 is a signal peptide; sequence MKISLTAATVAALVLAAPAFA. Residues C34, C37, H38, and M117 each coordinate heme c.

This sequence belongs to the cytochrome c family. Post-translationally, binds 1 heme c group covalently per subunit.

In terms of biological role, cytochrome c2 is found mainly in purple, non-sulfur, photosynthetic bacteria where it functions as the electron donor to the oxidized bacteriochlorophyll in the photophosphorylation pathway. However, it may also have a role in the respiratory chain and is found in some non-photosynthetic bacteria. The chain is Cytochrome c2 (cycA) from Rhodobacter capsulatus (strain ATCC BAA-309 / NBRC 16581 / SB1003).